Here is a 127-residue protein sequence, read N- to C-terminus: F420-non-reducing hydrogenase subunit G (127 aa).

The protein belongs to the [NiFe]/[NiFeSe] hydrogenase small subunit family. As to quaternary structure, the F420-non-reducing hydrogenase is composed of three subunits; MvhA, MvhD and MvhG. It forms a complex with the heterodisulfide reductase (hdr).

Functionally, part of a complex that provides reducing equivalents for heterodisulfide reductase. The chain is F420-non-reducing hydrogenase subunit G (mvhG) from Methanothermus fervidus.